The primary structure comprises 767 residues: Polyribonucleotide nucleotidyltransferase (767 aa).

Mg(2+) contacts are provided by aspartate 509 and aspartate 515. One can recognise a KH domain in the interval 575–634 (PRILTVKVPIDKIGEVIGPKGKMINSIQDETGAEITIEDDGTIYIGATDGPSAEAARDAI). The S1 motif domain occupies 646 to 718 (GERYLGTVVK…ERGKLSLVPV (73 aa)). The disordered stretch occupies residues 725–767 (AVAAPNGGESPNGAKKTDASGNGAKQPRRRRRTRSSSRSSENT). The segment covering 750–759 (QPRRRRRTRS) has biased composition (basic residues).

Belongs to the polyribonucleotide nucleotidyltransferase family. Mg(2+) is required as a cofactor.

Its subcellular location is the cytoplasm. The catalysed reaction is RNA(n+1) + phosphate = RNA(n) + a ribonucleoside 5'-diphosphate. In terms of biological role, involved in mRNA degradation. Catalyzes the phosphorolysis of single-stranded polyribonucleotides processively in the 3'- to 5'-direction. In Thermobifida fusca (strain YX), this protein is Polyribonucleotide nucleotidyltransferase.